The chain runs to 817 residues: LisH domain-containing protein ARMC9 (817 aa).

One can recognise a LisH domain in the interval 15 to 47 (SESDLLSMISEYLKFGEFEETARTFEKEVKRKG). Disordered regions lie at residues 580-605 (SATI…EEDV), 610-629 (LDKE…ESLL), and 642-817 (KTKR…SNRK). Residues 586 to 605 (QEPESDDEEDEDDDDDEEDV) show a composition bias toward acidic residues. Polar residues-rich tracts occupy residues 692–715 (SSRP…TLAT) and 740–750 (GQTTNSVQSYS). The span at 805-817 (GRPSQQSSQSNRK) shows a compositional bias: low complexity.

In terms of tissue distribution, expressed in multiple CNS regions, including the cerebellum, all periventricular regions, and all layers of the retina.

It is found in the cytoplasm. It localises to the cytoskeleton. The protein localises to the cilium basal body. The protein resides in the cell projection. Its subcellular location is the cilium. It is found in the microtubule organizing center. It localises to the centrosome. The protein localises to the centriole. Its function is as follows. Involved in ciliogenesis. It is required for appropriate acetylation and polyglutamylation of ciliary microtubules, and regulation of cilium length. Acts as a positive regulator of hedgehog (Hh) signaling. The polypeptide is LisH domain-containing protein ARMC9 (armc9) (Danio rerio (Zebrafish)).